The chain runs to 273 residues: Ribosomal RNA small subunit methyltransferase A (273 aa).

Residues Asn18, Leu20, Gly45, Glu66, Asp91, and Asn113 each contribute to the S-adenosyl-L-methionine site.

It belongs to the class I-like SAM-binding methyltransferase superfamily. rRNA adenine N(6)-methyltransferase family. RsmA subfamily.

It localises to the cytoplasm. The catalysed reaction is adenosine(1518)/adenosine(1519) in 16S rRNA + 4 S-adenosyl-L-methionine = N(6)-dimethyladenosine(1518)/N(6)-dimethyladenosine(1519) in 16S rRNA + 4 S-adenosyl-L-homocysteine + 4 H(+). Its function is as follows. Specifically dimethylates two adjacent adenosines (A1518 and A1519) in the loop of a conserved hairpin near the 3'-end of 16S rRNA in the 30S particle. May play a critical role in biogenesis of 30S subunits. The polypeptide is Ribosomal RNA small subunit methyltransferase A (Escherichia fergusonii (strain ATCC 35469 / DSM 13698 / CCUG 18766 / IAM 14443 / JCM 21226 / LMG 7866 / NBRC 102419 / NCTC 12128 / CDC 0568-73)).